A 396-amino-acid chain; its full sequence is Ornithine aminotransferase 2 (396 aa).

Position 255 is an N6-(pyridoxal phosphate)lysine (Lys-255).

It belongs to the class-III pyridoxal-phosphate-dependent aminotransferase family. OAT subfamily. Requires pyridoxal 5'-phosphate as cofactor.

Its subcellular location is the cytoplasm. The enzyme catalyses a 2-oxocarboxylate + L-ornithine = L-glutamate 5-semialdehyde + an L-alpha-amino acid. Its pathway is amino-acid biosynthesis; L-proline biosynthesis; L-glutamate 5-semialdehyde from L-ornithine: step 1/1. Functionally, catalyzes the interconversion of ornithine to glutamate semialdehyde. The chain is Ornithine aminotransferase 2 from Staphylococcus aureus (strain MRSA252).